The primary structure comprises 122 residues: MPTIQQLIRSERKRVYNKTKSPALKACPQRRGVCTRVYTTTPKKPNSALRKVARVRLTSGFEVTAYIPGIGHNLQEHSVVLIRGGRVKDLPGVRYHIIRGILDTAGVKDRAQSRSKYGVKRS.

The protein belongs to the universal ribosomal protein uS12 family. In terms of assembly, part of the 30S ribosomal subunit.

It localises to the plastid. The protein localises to the chloroplast. With S4 and S5 plays an important role in translational accuracy. Located at the interface of the 30S and 50S subunits. This Mesostigma viride (Green alga) protein is Small ribosomal subunit protein uS12c (rps12).